A 517-amino-acid chain; its full sequence is Putative thymidine phosphorylase (517 aa).

This sequence belongs to the thymidine/pyrimidine-nucleoside phosphorylase family. Type 2 subfamily.

The enzyme catalyses thymidine + phosphate = 2-deoxy-alpha-D-ribose 1-phosphate + thymine. The polypeptide is Putative thymidine phosphorylase (Legionella pneumophila (strain Corby)).